We begin with the raw amino-acid sequence, 843 residues long: Protein P (843 aa).

Positions 1-177 (MPLSYQHFRK…FCGSPYSWEQ (177 aa)) are terminal protein domain (TP). The tract at residues 178–346 (ELQHGRLFFK…YCLSHIVNLL (169 aa)) is spacer. The segment at 248 to 272 (HPTTRQSFGVEPSGSGHIDNSASNS) is disordered. A polymerase/reverse transcriptase domain (RT) region spans residues 347–690 (EDWGPCTENG…YLNLYPVARQ (344 aa)). The Reverse transcriptase domain occupies 357-600 (EHNIRIPRTP…YSLNFMGYVI (244 aa)). Residues Asp429, Asp551, and Asp552 each contribute to the Mg(2+) site.

It belongs to the hepadnaviridae P protein family.

It carries out the reaction DNA(n) + a 2'-deoxyribonucleoside 5'-triphosphate = DNA(n+1) + diphosphate. The catalysed reaction is Endonucleolytic cleavage to 5'-phosphomonoester.. Its activity is regulated as follows. Activated by host HSP70 and HSP40 in vitro to be able to bind the epsilon loop of the pgRNA. Because deletion of the RNase H region renders the protein partly chaperone-independent, the chaperones may be needed indirectly to relieve occlusion of the RNA-binding site by this domain. Inhibited by several reverse-transcriptase inhibitors: Lamivudine, Adefovir and Entecavir. Its function is as follows. Multifunctional enzyme that converts the viral RNA genome into dsDNA in viral cytoplasmic capsids. This enzyme displays a DNA polymerase activity that can copy either DNA or RNA templates, and a ribonuclease H (RNase H) activity that cleaves the RNA strand of RNA-DNA heteroduplexes in a partially processive 3'- to 5'-endonucleasic mode. Neo-synthesized pregenomic RNA (pgRNA) are encapsidated together with the P protein, and reverse-transcribed inside the nucleocapsid. Initiation of reverse-transcription occurs first by binding the epsilon loop on the pgRNA genome, and is initiated by protein priming, thereby the 5'-end of (-)DNA is covalently linked to P protein. Partial (+)DNA is synthesized from the (-)DNA template and generates the relaxed circular DNA (RC-DNA) genome. After budding and infection, the RC-DNA migrates in the nucleus, and is converted into a plasmid-like covalently closed circular DNA (cccDNA). The activity of P protein does not seem to be necessary for cccDNA generation, and is presumably released from (+)DNA by host nuclear DNA repair machinery. The chain is Protein P from Homo sapiens (Human).